Reading from the N-terminus, the 176-residue chain is Inner membrane-spanning protein YciB (176 aa).

Transmembrane regions (helical) follow at residues 24–44 (TATA…AFRH), 49–69 (PMLW…LVLH), 76–96 (WKPT…ALGF), 121–141 (YVWA…AYNF), and 149–169 (FKLF…SLWL).

Belongs to the YciB family.

The protein localises to the cell inner membrane. In terms of biological role, plays a role in cell envelope biogenesis, maintenance of cell envelope integrity and membrane homeostasis. This is Inner membrane-spanning protein YciB from Paraburkholderia phymatum (strain DSM 17167 / CIP 108236 / LMG 21445 / STM815) (Burkholderia phymatum).